We begin with the raw amino-acid sequence, 382 residues long: Succinate--CoA ligase [ADP-forming] subunit beta (382 aa).

Residues 9–240 (KELLKKYGLP…ITQIDPLEVE (232 aa)) form the ATP-grasp domain. K46, E98, T101, and E106 together coordinate ATP. Mg(2+) contacts are provided by N195 and D209. Substrate is bound by residues N260 and 317–319 (GIL).

This sequence belongs to the succinate/malate CoA ligase beta subunit family. In terms of assembly, heterotetramer of two alpha and two beta subunits. The cofactor is Mg(2+).

The catalysed reaction is succinate + ATP + CoA = succinyl-CoA + ADP + phosphate. The enzyme catalyses GTP + succinate + CoA = succinyl-CoA + GDP + phosphate. It functions in the pathway carbohydrate metabolism; tricarboxylic acid cycle; succinate from succinyl-CoA (ligase route): step 1/1. Its function is as follows. Succinyl-CoA synthetase functions in the citric acid cycle (TCA), coupling the hydrolysis of succinyl-CoA to the synthesis of either ATP or GTP and thus represents the only step of substrate-level phosphorylation in the TCA. The beta subunit provides nucleotide specificity of the enzyme and binds the substrate succinate, while the binding sites for coenzyme A and phosphate are found in the alpha subunit. The sequence is that of Succinate--CoA ligase [ADP-forming] subunit beta from Hydrogenobaculum sp. (strain Y04AAS1).